Reading from the N-terminus, the 414-residue chain is Serine/threonine-protein kinase 32B (414 aa).

The Protein kinase domain occupies 23–283 (FQILRAIGKG…LHDIQSVPYL (261 aa)). ATP contacts are provided by residues 29–37 (IGKGSFGKV) and Lys-52. Catalysis depends on Asp-146, which acts as the Proton acceptor. A disordered region spans residues 374–396 (QGQGSQLLDTDSRGGGQAQSKLQ).

The protein belongs to the protein kinase superfamily. Ser/Thr protein kinase family. Requires Mg(2+) as cofactor.

It catalyses the reaction L-seryl-[protein] + ATP = O-phospho-L-seryl-[protein] + ADP + H(+). The enzyme catalyses L-threonyl-[protein] + ATP = O-phospho-L-threonyl-[protein] + ADP + H(+). This chain is Serine/threonine-protein kinase 32B, found in Homo sapiens (Human).